The sequence spans 311 residues: Acetaldehyde dehydrogenase 2 (311 aa).

Position 11-14 (11-14) interacts with NAD(+); the sequence is SGNI. C131 serves as the catalytic Acyl-thioester intermediate. NAD(+) contacts are provided by residues 162–170 and N289; that span reads SAGPGTRAN.

The protein belongs to the acetaldehyde dehydrogenase family.

The catalysed reaction is acetaldehyde + NAD(+) + CoA = acetyl-CoA + NADH + H(+). This chain is Acetaldehyde dehydrogenase 2 (mhpF), found in Azotobacter vinelandii (strain DJ / ATCC BAA-1303).